An 88-amino-acid chain; its full sequence is Putative regulatory protein DvMF_1139 (88 aa).

The protein belongs to the RemA family.

In Nitratidesulfovibrio vulgaris (strain DSM 19637 / Miyazaki F) (Desulfovibrio vulgaris), this protein is Putative regulatory protein DvMF_1139.